The sequence spans 193 residues: Xanthine phosphoribosyltransferase (193 aa).

Positions 20 and 27 each coordinate xanthine. A 5-phospho-alpha-D-ribose 1-diphosphate-binding site is contributed by 128-132 (ANGQA). Position 156 (Lys-156) interacts with xanthine.

It belongs to the purine/pyrimidine phosphoribosyltransferase family. Xpt subfamily. Homodimer.

The protein localises to the cytoplasm. The catalysed reaction is XMP + diphosphate = xanthine + 5-phospho-alpha-D-ribose 1-diphosphate. It participates in purine metabolism; XMP biosynthesis via salvage pathway; XMP from xanthine: step 1/1. Functionally, converts the preformed base xanthine, a product of nucleic acid breakdown, to xanthosine 5'-monophosphate (XMP), so it can be reused for RNA or DNA synthesis. This chain is Xanthine phosphoribosyltransferase, found in Streptococcus agalactiae serotype Ia (strain ATCC 27591 / A909 / CDC SS700).